The chain runs to 303 residues: Pyridoxal 5'-phosphate synthase subunit PdxS (303 aa).

D33 contacts D-ribose 5-phosphate. K90 (schiff-base intermediate with D-ribose 5-phosphate) is an active-site residue. G162 is a D-ribose 5-phosphate binding site. R174 is a binding site for D-glyceraldehyde 3-phosphate. Residues G223 and 244–245 each bind D-ribose 5-phosphate; that span reads GS.

It belongs to the PdxS/SNZ family. As to quaternary structure, in the presence of PdxT, forms a dodecamer of heterodimers.

It carries out the reaction aldehydo-D-ribose 5-phosphate + D-glyceraldehyde 3-phosphate + L-glutamine = pyridoxal 5'-phosphate + L-glutamate + phosphate + 3 H2O + H(+). Its pathway is cofactor biosynthesis; pyridoxal 5'-phosphate biosynthesis. Catalyzes the formation of pyridoxal 5'-phosphate from ribose 5-phosphate (RBP), glyceraldehyde 3-phosphate (G3P) and ammonia. The ammonia is provided by the PdxT subunit. Can also use ribulose 5-phosphate and dihydroxyacetone phosphate as substrates, resulting from enzyme-catalyzed isomerization of RBP and G3P, respectively. This is Pyridoxal 5'-phosphate synthase subunit PdxS from Mycolicibacterium smegmatis (strain ATCC 700084 / mc(2)155) (Mycobacterium smegmatis).